Here is a 151-residue protein sequence, read N- to C-terminus: Probable transcriptional regulator syrB3 (151 aa).

Positions 1–65 (MVDESNAGPV…QERSEKLRLI (65 aa)) are disordered. The span at 7–23 (AGPVAPAVVADAEVKAP) shows a compositional bias: low complexity. The span at 52 to 65 (GYSEQERSEKLRLI) shows a compositional bias: basic and acidic residues.

It belongs to the SyrB family.

The chain is Probable transcriptional regulator syrB3 (syrB3) from Rhizobium meliloti (strain 1021) (Ensifer meliloti).